Reading from the N-terminus, the 259-residue chain is 5'-nucleotidase SurE (259 aa).

The a divalent metal cation site is built by Asp8, Asp9, Ser40, and Asn92.

Belongs to the SurE nucleotidase family. The cofactor is a divalent metal cation.

It is found in the cytoplasm. The catalysed reaction is a ribonucleoside 5'-phosphate + H2O = a ribonucleoside + phosphate. Functionally, nucleotidase that shows phosphatase activity on nucleoside 5'-monophosphates. The polypeptide is 5'-nucleotidase SurE (Xanthomonas campestris pv. campestris (strain 8004)).